Reading from the N-terminus, the 423-residue chain is Divalent metal cation transporter MntH (423 aa).

The next 11 membrane-spanning stretches (helical) occupy residues 31–51 (LMML…GNFA), 58–78 (SSFG…AMLI), 116–136 (IIAI…FQLV), 137–157 (FGIS…MILI), 168–188 (VVIG…LFFA), 213–233 (AAGI…SALF), 254–274 (IAMV…AAVF), 302–322 (VLFG…GTMA), 342–362 (FITM…TDIL), 363–383 (VMSQ…LLIF), and 401–421 (YAGV…MVTL).

Belongs to the NRAMP family.

It is found in the cell inner membrane. H(+)-stimulated, divalent metal cation uptake system. This chain is Divalent metal cation transporter MntH, found in Vibrio campbellii (strain ATCC BAA-1116).